Consider the following 504-residue polypeptide: UDP-N-acetylmuramoylalanine--D-glutamate ligase (504 aa).

Gly129–Thr135 contributes to the ATP binding site.

The protein belongs to the MurCDEF family.

It is found in the cytoplasm. The catalysed reaction is UDP-N-acetyl-alpha-D-muramoyl-L-alanine + D-glutamate + ATP = UDP-N-acetyl-alpha-D-muramoyl-L-alanyl-D-glutamate + ADP + phosphate + H(+). The protein operates within cell wall biogenesis; peptidoglycan biosynthesis. In terms of biological role, cell wall formation. Catalyzes the addition of glutamate to the nucleotide precursor UDP-N-acetylmuramoyl-L-alanine (UMA). This chain is UDP-N-acetylmuramoylalanine--D-glutamate ligase, found in Burkholderia mallei (strain ATCC 23344).